The following is a 516-amino-acid chain: Golgi-associated kinase 1B (516 aa).

Over 1–37 (MTCPDKLGQLINWFVCSLCAPRVCKLWSSRRPRTRRN) the chain is Cytoplasmic. Residues 38–55 (LLLGTACAIYLGFLVSQV) traverse the membrane as a helical; Signal-anchor for type II membrane protein segment. Residues 56 to 516 (GKGSFQHGQA…HGARVLPMNE (461 aa)) are Extracellular-facing. N-linked (GlcNAc...) asparagine glycosylation occurs at Asn286.

The protein belongs to the GASK family.

It localises to the golgi apparatus membrane. This Rattus norvegicus (Rat) protein is Golgi-associated kinase 1B.